The following is a 541-amino-acid chain: Chaperonin GroEL (541 aa).

ATP is bound by residues 29-32 (TLGP), 86-90 (DGTTT), glycine 413, 480-482 (NAA), and aspartate 496.

It belongs to the chaperonin (HSP60) family. As to quaternary structure, forms a cylinder of 14 subunits composed of two heptameric rings stacked back-to-back. Interacts with the co-chaperonin GroES.

The protein localises to the cytoplasm. The catalysed reaction is ATP + H2O + a folded polypeptide = ADP + phosphate + an unfolded polypeptide.. In terms of biological role, together with its co-chaperonin GroES, plays an essential role in assisting protein folding. The GroEL-GroES system forms a nano-cage that allows encapsulation of the non-native substrate proteins and provides a physical environment optimized to promote and accelerate protein folding. The polypeptide is Chaperonin GroEL (Gardnerella vaginalis).